A 242-amino-acid polypeptide reads, in one-letter code: Octanoyltransferase (242 aa).

The BPL/LPL catalytic domain maps to 31–206 (SQTTDEIWFL…LFLKNFGYNQ (176 aa)). Substrate-binding positions include 70-77 (RGGQVTYH), 137-139 (SIG), and 150-152 (GLA). Residue Cys168 is the Acyl-thioester intermediate of the active site.

This sequence belongs to the LipB family.

It is found in the cytoplasm. The catalysed reaction is octanoyl-[ACP] + L-lysyl-[protein] = N(6)-octanoyl-L-lysyl-[protein] + holo-[ACP] + H(+). It functions in the pathway protein modification; protein lipoylation via endogenous pathway; protein N(6)-(lipoyl)lysine from octanoyl-[acyl-carrier-protein]: step 1/2. Its function is as follows. Catalyzes the transfer of endogenously produced octanoic acid from octanoyl-acyl-carrier-protein onto the lipoyl domains of lipoate-dependent enzymes. Lipoyl-ACP can also act as a substrate although octanoyl-ACP is likely to be the physiological substrate. The polypeptide is Octanoyltransferase (Coxiella burnetii (strain RSA 493 / Nine Mile phase I)).